The sequence spans 69 residues: Small archaeal modifier protein 2 (69 aa).

Lysine 55 is covalently cross-linked (Glycyl lysine isopeptide (Lys-Gly) (interchain with G-Cter in SAMP2)). Glycine 69 is modified (1-thioglycine; alternate). Glycine 69 carries the glycyl adenylate; alternate modification. Glycine 69 is covalently cross-linked (Glycyl lysine isopeptide (Gly-Lys) (interchain with K-? in acceptor proteins); alternate).

In terms of processing, the C-terminal glycine is likely acyl-adenylated (-COAMP) by UbaA, and also probably thiocarboxylated (-COSH) to function in sulfur transfer.

Its function is as follows. Functions as a protein modifier covalently attached to lysine residues of substrate proteins, as well as a sulfur carrier in tRNA thiolation. The protein modification process is termed sampylation and involves the formation of an isopeptide bond between the SAMP2 C-terminal glycine carboxylate and the epsilon-amino group of lysine residues on target proteins. Is able to form polymeric chains with itself likely at Lys-55, similar to ubiquitin and other ubiquitin-like proteins. May serve as a proteolytic signal in the cell to target proteins for degradation by proteasomes. This is Small archaeal modifier protein 2 from Pyrococcus furiosus (strain ATCC 43587 / DSM 3638 / JCM 8422 / Vc1).